Here is a 503-residue protein sequence, read N- to C-terminus: Glutamate--tRNA ligase (503 aa).

Positions Pro9–Thr19 match the 'HIGH' region motif. Positions Lys251–Arg255 match the 'KMSKS' region motif. An ATP-binding site is contributed by Lys254.

Belongs to the class-I aminoacyl-tRNA synthetase family. Glutamate--tRNA ligase type 1 subfamily. In terms of assembly, monomer.

The protein resides in the cytoplasm. The enzyme catalyses tRNA(Glu) + L-glutamate + ATP = L-glutamyl-tRNA(Glu) + AMP + diphosphate. In terms of biological role, catalyzes the attachment of glutamate to tRNA(Glu) in a two-step reaction: glutamate is first activated by ATP to form Glu-AMP and then transferred to the acceptor end of tRNA(Glu). The polypeptide is Glutamate--tRNA ligase (Saccharophagus degradans (strain 2-40 / ATCC 43961 / DSM 17024)).